Here is a 472-residue protein sequence, read N- to C-terminus: Glycerol-3-phosphate acyltransferase, chloroplastic (472 aa).

The N-terminal 102 residues, 1–102 (MLVLSSSAPP…EIPVKKEDDN (102 aa)), are a transit peptide targeting the chloroplast. The HXXXXD motif motif lies at 241–246 (HQSEAD).

It belongs to the GPAT/DAPAT family.

The protein resides in the plastid. It localises to the chloroplast stroma. The catalysed reaction is sn-glycerol 3-phosphate + an acyl-CoA = a 1-acyl-sn-glycero-3-phosphate + CoA. The protein operates within phospholipid metabolism; CDP-diacylglycerol biosynthesis; CDP-diacylglycerol from sn-glycerol 3-phosphate: step 1/3. Esterifies acyl-group from acyl-ACP to the sn-1 position of glycerol-3-phosphate. The enzyme from chilling-resistant plants discriminates against non-fluid palmitic acid and selects oleic acid whereas the enzyme from sensitive plants accepts both fatty acids. This is an oleate-selective acyltransferase. The protein is Glycerol-3-phosphate acyltransferase, chloroplastic (GAT) of Spinacia oleracea (Spinach).